Consider the following 144-residue polypeptide: Large ribosomal subunit protein uL15 (144 aa).

The segment at 1–57 is disordered; the sequence is MFLNTLRPGEGSKHAPKRVGRGIGSGLGKTGGRGHKGLKSRSGGSVKPGFEGGQMPL. Residues 21–31 show a composition bias toward gly residues; it reads RGIGSGLGKTG.

This sequence belongs to the universal ribosomal protein uL15 family. In terms of assembly, part of the 50S ribosomal subunit.

In terms of biological role, binds to the 23S rRNA. The sequence is that of Large ribosomal subunit protein uL15 from Marinomonas sp. (strain MWYL1).